The chain runs to 387 residues: Phosphoglycerate kinase (387 aa).

Substrate-binding positions include 21–23, Arg-36, 59–62, Arg-113, and Arg-146; these read DLN and HLGR. Residues Lys-197, Glu-314, and 340-343 contribute to the ATP site; that span reads GGDT.

The protein belongs to the phosphoglycerate kinase family. Monomer.

Its subcellular location is the cytoplasm. The catalysed reaction is (2R)-3-phosphoglycerate + ATP = (2R)-3-phospho-glyceroyl phosphate + ADP. Its pathway is carbohydrate degradation; glycolysis; pyruvate from D-glyceraldehyde 3-phosphate: step 2/5. The protein is Phosphoglycerate kinase of Enterobacter sp. (strain 638).